A 367-amino-acid polypeptide reads, in one-letter code: Histidinol-phosphate aminotransferase 1 (367 aa).

The residue at position 226 (lysine 226) is an N6-(pyridoxal phosphate)lysine.

Belongs to the class-II pyridoxal-phosphate-dependent aminotransferase family. Histidinol-phosphate aminotransferase subfamily. In terms of assembly, homodimer. Requires pyridoxal 5'-phosphate as cofactor.

The catalysed reaction is L-histidinol phosphate + 2-oxoglutarate = 3-(imidazol-4-yl)-2-oxopropyl phosphate + L-glutamate. Its pathway is amino-acid biosynthesis; L-histidine biosynthesis; L-histidine from 5-phospho-alpha-D-ribose 1-diphosphate: step 7/9. This Haemophilus influenzae (strain ATCC 51907 / DSM 11121 / KW20 / Rd) protein is Histidinol-phosphate aminotransferase 1 (hisC1).